A 430-amino-acid chain; its full sequence is Adenylosuccinate synthetase (430 aa).

GTP-binding positions include 12–18 (GDEGKGK) and 40–42 (GHT). Residue aspartate 13 is the Proton acceptor of the active site. Mg(2+) contacts are provided by aspartate 13 and glycine 40. Residues 13 to 16 (DEGK), 38 to 41 (NAGH), threonine 128, arginine 142, glutamine 223, threonine 238, and arginine 302 each bind IMP. The active-site Proton donor is histidine 41. Substrate is bound at residue 298-304 (TTTGRPR). Residues arginine 304, 330 to 332 (SID), and 412 to 414 (SVG) each bind GTP.

This sequence belongs to the adenylosuccinate synthetase family. Homodimer. Mg(2+) is required as a cofactor.

Its subcellular location is the cytoplasm. It carries out the reaction IMP + L-aspartate + GTP = N(6)-(1,2-dicarboxyethyl)-AMP + GDP + phosphate + 2 H(+). The protein operates within purine metabolism; AMP biosynthesis via de novo pathway; AMP from IMP: step 1/2. Plays an important role in the de novo pathway of purine nucleotide biosynthesis. Catalyzes the first committed step in the biosynthesis of AMP from IMP. This is Adenylosuccinate synthetase from Streptococcus sanguinis (strain SK36).